The chain runs to 250 residues: MQNKNKTVVKSMALLNLFLHKPSLTLSELVSLTGMPKTSVHRMVSSLEEMGFLSRDASGAYSLGLVFLEFGQLVADRLDIRKIAKPVMEELCREVDEAVQLIMRDGNEAIYVEKIEGTQTVRLYTAIGRRSPLYAGACARSILSFLPREEIEAYIKQTELISIGSGTITDPEKLLQEIDASVQNGYTVSYSELENYTAAIGAPIFNHERQVAAGISIAGFEARFTEDRLPYLTEKVKDAALQISRKIGYT.

The region spanning 5 to 65 (NKTVVKSMAL…DASGAYSLGL (61 aa)) is the HTH iclR-type domain. The H-T-H motif DNA-binding region spans 26–45 (LSELVSLTGMPKTSVHRMVS). The 170-residue stretch at 80–249 (IRKIAKPVME…ALQISRKIGY (170 aa)) folds into the IclR-ED domain.

Its function is as follows. Transcriptional repressor of the kip gene-containing operon. The chain is HTH-type transcriptional regulator KipR (kipR) from Bacillus subtilis (strain 168).